The primary structure comprises 500 residues: Probable transcription factor FPSE_09189 (500 aa).

Disordered stretches follow at residues 161-197 (MVRH…PSLA) and 457-500 (IRTG…TQLE). Residues 459–474 (TGHEDSSRDGGRENKA) are compositionally biased toward basic and acidic residues. Residues 475–484 (MNRNRSTGNS) show a composition bias toward polar residues.

It is found in the nucleus. The two putative transcription factors FPSE_09188 and FPSE_09189 could be responsible for orchestrating expression of the W493 A and B biosynthesis cluster genes. W493 A and B consist of six amino acid residues D-allo-thr, L-Ala, D-Ala, L-Gln, D-Tyr, and L-Val/L-Ile linked to a 3-hydroxy-4-methyltetradecanoic acid polyketide chain. This is Probable transcription factor FPSE_09189 from Fusarium pseudograminearum (strain CS3096) (Wheat and barley crown-rot fungus).